A 136-amino-acid chain; its full sequence is MNTVHVNVVTPDGAAFEGDARMVIAKSVTGELGILPKHIPMVTPLDVSVLKLRHEDGGRTLIAISGGFMEVRPDTVTILAETAEMADKIDYDRASAAKVRAERRLQDTKLSELEFRRAELALKKAINRLSIRDMKE.

Belongs to the ATPase epsilon chain family. In terms of assembly, F-type ATPases have 2 components, CF(1) - the catalytic core - and CF(0) - the membrane proton channel. CF(1) has five subunits: alpha(3), beta(3), gamma(1), delta(1), epsilon(1). CF(0) has three main subunits: a, b and c.

The protein localises to the cell membrane. In terms of biological role, produces ATP from ADP in the presence of a proton gradient across the membrane. The sequence is that of ATP synthase epsilon chain from Exiguobacterium sp. (strain ATCC BAA-1283 / AT1b).